The sequence spans 186 residues: Translation initiation factor IF-3 (186 aa).

It belongs to the IF-3 family. In terms of assembly, monomer.

It localises to the cytoplasm. IF-3 binds to the 30S ribosomal subunit and shifts the equilibrium between 70S ribosomes and their 50S and 30S subunits in favor of the free subunits, thus enhancing the availability of 30S subunits on which protein synthesis initiation begins. In Borreliella burgdorferi (strain ATCC 35210 / DSM 4680 / CIP 102532 / B31) (Borrelia burgdorferi), this protein is Translation initiation factor IF-3.